A 586-amino-acid polypeptide reads, in one-letter code: Alpha-1,2-mannosyltransferase MNN5 (586 aa).

The first 29 residues, 1-29, serve as a signal peptide directing secretion; the sequence is MLIRLKKRKILQVIVSAVVLILFFCSVHN. Residues Asn113, Asn136, Asn259, and Asn264 are each glycosylated (N-linked (GlcNAc...) asparagine).

Belongs to the MNN1/MNT family. Glycosylated.

The protein localises to the golgi apparatus. It is found in the cis-Golgi network. Its pathway is protein modification; protein glycosylation. Responsible for addition of first and second mannose residues to the outer chain of core N-linked polysaccharides and to O-linked mannotriose. Implicated in late Golgi modifications. This is Alpha-1,2-mannosyltransferase MNN5 (MNN5) from Saccharomyces cerevisiae (strain YJM789) (Baker's yeast).